The chain runs to 133 residues: ATP synthase epsilon chain, chloroplastic (133 aa).

This sequence belongs to the ATPase epsilon chain family. F-type ATPases have 2 components, CF(1) - the catalytic core - and CF(0) - the membrane proton channel. CF(1) has five subunits: alpha(3), beta(3), gamma(1), delta(1), epsilon(1). CF(0) has three main subunits: a, b and c.

Its subcellular location is the plastid. The protein localises to the chloroplast thylakoid membrane. Its function is as follows. Produces ATP from ADP in the presence of a proton gradient across the membrane. The polypeptide is ATP synthase epsilon chain, chloroplastic (Piper cenocladum (Ant piper)).